Here is a 320-residue protein sequence, read N- to C-terminus: Cytochrome f (320 aa).

The first 35 residues, 1-35 (MQTRKTLSWIKEEITRSISLSLMLSIITHASLSNA), serve as a signal peptide directing secretion. Positions 36, 56, 59, and 60 each coordinate heme. The helical transmembrane segment at 286–306 (VQGLLFFLTSVLLAQIFLVLK) threads the bilayer.

It belongs to the cytochrome f family. In terms of assembly, the 4 large subunits of the cytochrome b6-f complex are cytochrome b6, subunit IV (17 kDa polypeptide, petD), cytochrome f and the Rieske protein, while the 4 small subunits are PetG, PetL, PetM and PetN. The complex functions as a dimer. Heme serves as cofactor.

The protein resides in the plastid. It is found in the chloroplast thylakoid membrane. Component of the cytochrome b6-f complex, which mediates electron transfer between photosystem II (PSII) and photosystem I (PSI), cyclic electron flow around PSI, and state transitions. This is Cytochrome f from Pelargonium hortorum (Common geranium).